The following is a 54-amino-acid chain: Ovomucoid (54 aa).

One can recognise a Kazal-like domain in the interval 4-54 (VDCSDYPKPVCTLDYMPLCGSDNKTYSNKCNFCNAVVDSNGTITLSHFGRC). Intrachain disulfides connect cysteine 6–cysteine 36, cysteine 14–cysteine 33, and cysteine 22–cysteine 54. Residue asparagine 43 is glycosylated (N-linked (GlcNAc...) asparagine).

The protein localises to the secreted. The protein is Ovomucoid of Coloeus monedula (Eurasian jackdaw).